Consider the following 424-residue polypeptide: Enolase (424 aa).

Glutamine 162 is a (2R)-2-phosphoglycerate binding site. Catalysis depends on glutamate 204, which acts as the Proton donor. 3 residues coordinate Mg(2+): aspartate 241, glutamate 284, and aspartate 311. (2R)-2-phosphoglycerate contacts are provided by lysine 336, arginine 365, serine 366, and lysine 387. Catalysis depends on lysine 336, which acts as the Proton acceptor.

Belongs to the enolase family. Mg(2+) is required as a cofactor.

Its subcellular location is the cytoplasm. It is found in the secreted. The protein localises to the cell surface. The enzyme catalyses (2R)-2-phosphoglycerate = phosphoenolpyruvate + H2O. It functions in the pathway carbohydrate degradation; glycolysis; pyruvate from D-glyceraldehyde 3-phosphate: step 4/5. In terms of biological role, catalyzes the reversible conversion of 2-phosphoglycerate (2-PG) into phosphoenolpyruvate (PEP). It is essential for the degradation of carbohydrates via glycolysis. This is Enolase from Maricaulis maris (strain MCS10) (Caulobacter maris).